A 242-amino-acid chain; its full sequence is DnaJ homolog subfamily B member 3 (242 aa).

The J domain occupies 1–69; that stretch reads MANYYEVLGV…KKRDVYDRYG (69 aa).

As to expression, testis specific.

In terms of biological role, may operate as a co-chaperone of the male germ cell- and haploid stage-specific Hsp70 proteins. The polypeptide is DnaJ homolog subfamily B member 3 (DNAJB3) (Macaca fuscata fuscata (Japanese macaque)).